The following is a 350-amino-acid chain: Streptomycin biosynthesis operon possible regulatory protein (350 aa).

The segment covering 1-10 (MEHISGNSPE) has biased composition (polar residues). Disordered stretches follow at residues 1 to 20 (MEHI…AAVT), 168 to 189 (AGVP…LDPT), and 211 to 258 (AAQA…SRAD). Composition is skewed to basic and acidic residues over residues 177 to 189 (IGRD…LDPT) and 223 to 242 (DVRK…DRQQ).

The protein is Streptomycin biosynthesis operon possible regulatory protein (strR) of Streptomyces griseus.